Consider the following 263-residue polypeptide: Small ribosomal subunit protein eS4 (263 aa).

Residues 42–104 (LPLIIFLRNR…TGENFRLIYD (63 aa)) form the S4 RNA-binding domain.

It belongs to the eukaryotic ribosomal protein eS4 family.

The protein is Small ribosomal subunit protein eS4 (RPS4) of Cricetulus griseus (Chinese hamster).